We begin with the raw amino-acid sequence, 297 residues long: Homoserine kinase (297 aa).

79-89 (PIARGLGSSGA) contacts ATP.

Belongs to the GHMP kinase family. Homoserine kinase subfamily.

It localises to the cytoplasm. The enzyme catalyses L-homoserine + ATP = O-phospho-L-homoserine + ADP + H(+). It participates in amino-acid biosynthesis; L-threonine biosynthesis; L-threonine from L-aspartate: step 4/5. Catalyzes the ATP-dependent phosphorylation of L-homoserine to L-homoserine phosphate. In Pyrobaculum aerophilum (strain ATCC 51768 / DSM 7523 / JCM 9630 / CIP 104966 / NBRC 100827 / IM2), this protein is Homoserine kinase.